Reading from the N-terminus, the 454-residue chain is Bifunctional protein GlmU (454 aa).

The tract at residues 1–226 (MLAVAVLAAG…PDEVNGINNR (226 aa)) is pyrophosphorylase. Residues 7–10 (LAAG), K21, Q73, and 78–79 (GT) contribute to the UDP-N-acetyl-alpha-D-glucosamine site. D103 serves as a coordination point for Mg(2+). Positions 140, 155, 170, and 224 each coordinate UDP-N-acetyl-alpha-D-glucosamine. N224 is a binding site for Mg(2+). Positions 227–247 (RQLAQCEGVLQQRLRDHWMDE) are linker. Residues 248–454 (GVTFVDPASC…WDRNTQAAQS (207 aa)) are N-acetyltransferase. UDP-N-acetyl-alpha-D-glucosamine is bound by residues R329 and K347. The active-site Proton acceptor is the H359. 2 residues coordinate UDP-N-acetyl-alpha-D-glucosamine: Y362 and N373. Acetyl-CoA is bound by residues A376, A419, and R436.

It in the N-terminal section; belongs to the N-acetylglucosamine-1-phosphate uridyltransferase family. This sequence in the C-terminal section; belongs to the transferase hexapeptide repeat family. Homotrimer. Requires Mg(2+) as cofactor.

It localises to the cytoplasm. It catalyses the reaction alpha-D-glucosamine 1-phosphate + acetyl-CoA = N-acetyl-alpha-D-glucosamine 1-phosphate + CoA + H(+). The enzyme catalyses N-acetyl-alpha-D-glucosamine 1-phosphate + UTP + H(+) = UDP-N-acetyl-alpha-D-glucosamine + diphosphate. It functions in the pathway nucleotide-sugar biosynthesis; UDP-N-acetyl-alpha-D-glucosamine biosynthesis; N-acetyl-alpha-D-glucosamine 1-phosphate from alpha-D-glucosamine 6-phosphate (route II): step 2/2. Its pathway is nucleotide-sugar biosynthesis; UDP-N-acetyl-alpha-D-glucosamine biosynthesis; UDP-N-acetyl-alpha-D-glucosamine from N-acetyl-alpha-D-glucosamine 1-phosphate: step 1/1. The protein operates within bacterial outer membrane biogenesis; LPS lipid A biosynthesis. Functionally, catalyzes the last two sequential reactions in the de novo biosynthetic pathway for UDP-N-acetylglucosamine (UDP-GlcNAc). The C-terminal domain catalyzes the transfer of acetyl group from acetyl coenzyme A to glucosamine-1-phosphate (GlcN-1-P) to produce N-acetylglucosamine-1-phosphate (GlcNAc-1-P), which is converted into UDP-GlcNAc by the transfer of uridine 5-monophosphate (from uridine 5-triphosphate), a reaction catalyzed by the N-terminal domain. In Synechococcus sp. (strain CC9311), this protein is Bifunctional protein GlmU.